The chain runs to 876 residues: Serrate RNA effector molecule homolog (876 aa).

The segment at 1–90 (MGDSDDEYDR…RRDWDEHSSD (90 aa)) is disordered. Gly2 carries the post-translational modification N-acetylglycine. At Ser4 the chain carries Phosphoserine. Tyr8 bears the Phosphotyrosine mark. Over residues 8–73 (YDRRRRDKFR…ERFSPPRHEL (66 aa)) the composition is skewed to basic and acidic residues. 3 positions are modified to phosphoserine: Ser67, Ser74, and Ser136. A Glycyl lysine isopeptide (Lys-Gly) (interchain with G-Cter in SUMO2) cross-link involves residue Lys150. The disordered stretch occupies residues 272-413 (EEEEQAGKPG…PKDAPGLECK (142 aa)). Basic and acidic residues predominate over residues 297–347 (DGERKANEKDDKKEDGKQAENESSSDDKIKKSEGDGDKEEKKEDSEKEAKK). Acidic residues predominate over residues 370 to 387 (SESESESGQAEEEKEEAD). The segment covering 388–413 (ETLKEKEKPKEEEREKPKDAPGLECK) has biased composition (basic and acidic residues). Residue Ser493 is modified to Phosphoserine. Thr544 is modified (phosphothreonine). Ser570 bears the Phosphoserine mark. Residues 575-597 (ELLGSSGGAPPEEPPKEGNPAEI) are disordered. Thr671 carries the post-translational modification Phosphothreonine. Ser679 carries the phosphoserine modification. Omega-N-methylarginine is present on residues Arg833, Arg840, and Arg850. Positions 835–854 (NYDAFRGQGGYPGKPRNRMV) are disordered.

This sequence belongs to the ARS2 family. In terms of assembly, interacts with CASP8AP2, ERBB4, NCBP1/CBP80 and DROSHA. Interacts with LUZP4. Interacts with NCBP2/CBP20 and NCBP3. Interacts with MTREX.

It localises to the nucleus. It is found in the nucleoplasm. The protein resides in the cytoplasm. Acts as a mediator between the cap-binding complex (CBC) and the primary microRNAs (miRNAs) processing machinery during cell proliferation. Contributes to the stability and delivery of capped primary miRNA transcripts to the primary miRNA processing complex containing DGCR8 and DROSHA, thereby playing a role in RNA-mediated gene silencing (RNAi) by miRNAs. Binds capped RNAs (m7GpppG-capped RNA); however interaction is probably mediated via its interaction with NCBP1/CBP80 component of the CBC complex. Involved in cell cycle progression at S phase. Does not directly confer arsenite resistance but rather modulates arsenic sensitivity. Independently of its activity on miRNAs, necessary and sufficient to promote neural stem cell self-renewal. Does so by directly binding SOX2 promoter and positively regulating its transcription. This Bos taurus (Bovine) protein is Serrate RNA effector molecule homolog (SRRT).